We begin with the raw amino-acid sequence, 208 residues long: Transmembrane protein 160 (208 aa).

The N-terminal 45 residues, 1-45, are a transit peptide targeting the mitochondrion; that stretch reads MASIRWLMGSRLSRFVCPFAQLVRQPVLRYVRPPVRALHRGSVRR. 3 helical membrane passes run 82-102, 110-130, and 147-167; these read GFLSWFRNGLLATGIGVIAFV, AGYAFFILGGMCVSFGGASYV, and VLLHTAVVSSAALFWLCAVSL. Over residues 181–192 the composition is skewed to acidic residues; the sequence is DDEEHGADESSE. A disordered region spans residues 181–208; that stretch reads DDEEHGADESSECAECRARRDREKGQDK. The segment covering 194 to 208 has biased composition (basic and acidic residues); sequence AECRARRDREKGQDK.

The protein belongs to the TMEM160 family.

Its subcellular location is the mitochondrion inner membrane. The sequence is that of Transmembrane protein 160 from Danio rerio (Zebrafish).